A 264-amino-acid polypeptide reads, in one-letter code: MQLFPVMLATLCIVLQLLIGSSALATTNRHVSNSHWLPAVATWYGSPNGDGSDGGACGYGTLVDVKPLHARVGAVNPILFKNGEGCGACYKVRCLDKSICSRRAVTVIITDECPGCSKTSTHFDLSGAVFGRLAIAGESGPLRNRGLIPVIYRRTACKYRGKNIAFHVNEGSTDFWLSLLVEFEDGEGDIGSMHIRQAGAREWLEMKHVWGANWCIIGGPLKGPFSIKLTTLSAGKTLSATDVVPRNWAPKATYSSRLNFSPVL.

The first 25 residues, 1 to 25 (MQLFPVMLATLCIVLQLLIGSSALA), serve as a signal peptide directing secretion. One can recognise an Expansin-like EG45 domain in the interval 54-162 (GGACGYGTLV…RRTACKYRGK (109 aa)). Intrachain disulfides connect C57-C86, C89-C157, and C94-C100. Positions 175 to 256 (FWLSLLVEFE…NWAPKATYSS (82 aa)) constitute an Expansin-like CBD domain.

This sequence belongs to the expansin family. Expansin B subfamily.

Its subcellular location is the secreted. The protein resides in the cell wall. The protein localises to the membrane. Its function is as follows. May cause loosening and extension of plant cell walls by disrupting non-covalent bonding between cellulose microfibrils and matrix glucans. No enzymatic activity has been found. In Arabidopsis thaliana (Mouse-ear cress), this protein is Expansin-B3 (EXPB3).